A 396-amino-acid chain; its full sequence is MGKEKLILAYSGGLDTSVAIAWLKKDYDVIAVCMDVGEGKDLDFIHDKALTIGAIESYILDVKDEFAEHFVLPALQAHAMYEQKYPLVSALSRPIIAQKLVEMAHQTGATTIAHGCTGKGNDQVRFEVAIAALDPELKVIAPVREWKWHREEEITFAKANGVPIPADLDNPYSIDQNLWGRANECGVLENPWNQAPEEAFGITKSPEEAPDCAEYIDITFQNGKPIAINNQEMTLADLILSLNEIAGKHGIGRIDHVENRLVGIKSREIYECPAAMVLLAAHKEIEDLTLVREVSHFKPILENELSNLIYNALWFSPATKAIIAYVKETQKVVNGTTKVKLYKGSAQVVARHSSNSLYDENLATYTAADSFDQDAAVGFIKLWGLPTQVNAQVNKG.

9–17 (AYSGGLDTS) serves as a coordination point for ATP. Residue tyrosine 85 participates in L-citrulline binding. ATP is bound at residue glycine 115. The L-aspartate site is built by threonine 117, asparagine 121, and aspartate 122. Position 121 (asparagine 121) interacts with L-citrulline. L-citrulline-binding residues include arginine 125, serine 173, glutamate 258, and tyrosine 270.

The protein belongs to the argininosuccinate synthase family. Type 1 subfamily. As to quaternary structure, homotetramer.

It localises to the cytoplasm. It catalyses the reaction L-citrulline + L-aspartate + ATP = 2-(N(omega)-L-arginino)succinate + AMP + diphosphate + H(+). It functions in the pathway amino-acid biosynthesis; L-arginine biosynthesis; L-arginine from L-ornithine and carbamoyl phosphate: step 2/3. The polypeptide is Argininosuccinate synthase (Streptococcus agalactiae serotype V (strain ATCC BAA-611 / 2603 V/R)).